Here is a 163-residue protein sequence, read N- to C-terminus: Large ribosomal subunit protein uL10 (163 aa).

It belongs to the universal ribosomal protein uL10 family. In terms of assembly, part of the ribosomal stalk of the 50S ribosomal subunit. The N-terminus interacts with L11 and the large rRNA to form the base of the stalk. The C-terminus forms an elongated spine to which L12 dimers bind in a sequential fashion forming a multimeric L10(L12)X complex.

Forms part of the ribosomal stalk, playing a central role in the interaction of the ribosome with GTP-bound translation factors. The sequence is that of Large ribosomal subunit protein uL10 from Haemophilus ducreyi (strain 35000HP / ATCC 700724).